We begin with the raw amino-acid sequence, 361 residues long: Holliday junction branch migration complex subunit RuvB (361 aa).

The interval 1–21 (MHKDEDQRLLGAVPLPNDPDR) is disordered. Residues 1-184 (MHKDEDQRLL…FGIPIRLNFY (184 aa)) are large ATPase domain (RuvB-L). ATP contacts are provided by residues leucine 23, arginine 24, glycine 65, lysine 68, threonine 69, threonine 70, 131 to 133 (EDY), arginine 174, tyrosine 184, and arginine 221. Threonine 69 lines the Mg(2+) pocket. Residues 185–255 (TIEELEYIVQ…IADEALSRLE (71 aa)) form a small ATPAse domain (RuvB-S) region. Residues 258–361 (HLGLDPLDRR…QTVLWDEADD (104 aa)) are head domain (RuvB-H). 3 residues coordinate DNA: arginine 294, arginine 313, and arginine 318.

The protein belongs to the RuvB family. Homohexamer. Forms an RuvA(8)-RuvB(12)-Holliday junction (HJ) complex. HJ DNA is sandwiched between 2 RuvA tetramers; dsDNA enters through RuvA and exits via RuvB. An RuvB hexamer assembles on each DNA strand where it exits the tetramer. Each RuvB hexamer is contacted by two RuvA subunits (via domain III) on 2 adjacent RuvB subunits; this complex drives branch migration. In the full resolvosome a probable DNA-RuvA(4)-RuvB(12)-RuvC(2) complex forms which resolves the HJ.

The protein resides in the cytoplasm. The catalysed reaction is ATP + H2O = ADP + phosphate + H(+). Its function is as follows. The RuvA-RuvB-RuvC complex processes Holliday junction (HJ) DNA during genetic recombination and DNA repair, while the RuvA-RuvB complex plays an important role in the rescue of blocked DNA replication forks via replication fork reversal (RFR). RuvA specifically binds to HJ cruciform DNA, conferring on it an open structure. The RuvB hexamer acts as an ATP-dependent pump, pulling dsDNA into and through the RuvAB complex. RuvB forms 2 homohexamers on either side of HJ DNA bound by 1 or 2 RuvA tetramers; 4 subunits per hexamer contact DNA at a time. Coordinated motions by a converter formed by DNA-disengaged RuvB subunits stimulates ATP hydrolysis and nucleotide exchange. Immobilization of the converter enables RuvB to convert the ATP-contained energy into a lever motion, pulling 2 nucleotides of DNA out of the RuvA tetramer per ATP hydrolyzed, thus driving DNA branch migration. The RuvB motors rotate together with the DNA substrate, which together with the progressing nucleotide cycle form the mechanistic basis for DNA recombination by continuous HJ branch migration. Branch migration allows RuvC to scan DNA until it finds its consensus sequence, where it cleaves and resolves cruciform DNA. This is Holliday junction branch migration complex subunit RuvB from Bartonella henselae (strain ATCC 49882 / DSM 28221 / CCUG 30454 / Houston 1) (Rochalimaea henselae).